The sequence spans 85 residues: UPF0297 protein CLL_A1175 (85 aa).

This sequence belongs to the UPF0297 family.

The sequence is that of UPF0297 protein CLL_A1175 from Clostridium botulinum (strain Eklund 17B / Type B).